Consider the following 225-residue polypeptide: UPF0758 protein Sez_1052 (225 aa).

The 123-residue stretch at 102–224 (PVLSSAQVAE…YYSFREKSDL (123 aa)) folds into the MPN domain. Zn(2+) is bound by residues His173, His175, and Asp186. A JAMM motif motif is present at residues 173-186 (HNHPSGLTKPSAND).

The protein belongs to the UPF0758 family.

This is UPF0758 protein Sez_1052 from Streptococcus equi subsp. zooepidemicus (strain MGCS10565).